Reading from the N-terminus, the 181-residue chain is Shikimate kinase 2 (181 aa).

12–17 (GCGKTT) is an ATP binding site. Thr16 and Asp32 together coordinate Mg(2+). Residues Asp34, Arg58, and Gly79 each coordinate substrate. An LID domain region spans residues 112 to 126 (EAEPEAELRPTLTGK). Arg120 lines the ATP pocket. Arg139 is a binding site for substrate.

It belongs to the shikimate kinase family. AroL subfamily. Monomer. Requires Mg(2+) as cofactor.

It is found in the cytoplasm. The enzyme catalyses shikimate + ATP = 3-phosphoshikimate + ADP + H(+). It functions in the pathway metabolic intermediate biosynthesis; chorismate biosynthesis; chorismate from D-erythrose 4-phosphate and phosphoenolpyruvate: step 5/7. Catalyzes the specific phosphorylation of the 3-hydroxyl group of shikimic acid using ATP as a cosubstrate. This Salmonella schwarzengrund (strain CVM19633) protein is Shikimate kinase 2.